The sequence spans 379 residues: MTDKYGFLRSSYTNYLSSSKDVYVSQSQIRLFRIKTGDTIRGEVRTPNPKKGEKYFPLKRIFQINGRFPTSVIKRKSFKKLTPLFPNEKFQISKRKVTLSTRIVDFFSPLGKGQRGIIVAPPKTGKTTLLKEIANTIAYNHPEVYLIILLIDERPEEVTDMQRNVNGEVVYSTFDEPAEKHVKVANIVLQKAKRMVECGHDVVILLDSITRLARAYNTVSPTSGKILSGGVDSNALQKPKRFFGAARNIEYGGSLSIIATAIIETGSKMDEVIFEEFKGTGNMELQLDRKIANKRIFPAIDLNASSTRKEEFLLTKYNLNKMFLIRKLLAEMTSVEAIDFIKTRLMKTKNNQEFFKSIKSSIKSSIKSSRDRENIEKKI.

Residues 1-68 form the Rho RNA-BD domain; it reads MTDKYGFLRS…KRIFQINGRF (68 aa). Residues 111 to 116, 123 to 128, and R154 each bind ATP; these read GKGQRG and KTGKTT.

Belongs to the Rho family. Homohexamer. The homohexamer assembles into an open ring structure.

In terms of biological role, facilitates transcription termination by a mechanism that involves Rho binding to the nascent RNA, activation of Rho's RNA-dependent ATPase activity, and release of the mRNA from the DNA template. This chain is Transcription termination factor Rho, found in Karelsulcia muelleri (strain SMDSEM) (Sulcia muelleri).